The chain runs to 215 residues: uncharacterized protein (215 aa).

This is an uncharacterized protein from Acanthamoeba polyphaga (Amoeba).